A 761-amino-acid chain; its full sequence is uncharacterized protein (761 aa).

The CR-type zinc finger occupies 1–84; it reads MIVKCPICDG…CGGSGKVVKC (84 aa). The S1 motif domain maps to 135–200; sequence GKFYKGVVTR…EKREIDFKYI (66 aa).

This is an uncharacterized protein from Methanocaldococcus jannaschii (strain ATCC 43067 / DSM 2661 / JAL-1 / JCM 10045 / NBRC 100440) (Methanococcus jannaschii).